The primary structure comprises 640 residues: Endoglucanase 2 (640 aa).

The first 34 residues, 1–34 (MARGGGAAGVSMAHHLGIALVVLVFAAMAQVARG), serve as a signal peptide directing secretion. The active-site Nucleophile is the Asp-93. Catalysis depends on residues His-428, Asp-480, and Glu-489. The propeptide at 512–640 (RARGRLGQSL…DVWVTGYKLV (129 aa)) is removed in mature form. Asn-528 carries N-linked (GlcNAc...) asparagine glycosylation.

This sequence belongs to the glycosyl hydrolase 9 (cellulase E) family. In terms of tissue distribution, expressed in roots and flowers.

The protein resides in the secreted. It catalyses the reaction Endohydrolysis of (1-&gt;4)-beta-D-glucosidic linkages in cellulose, lichenin and cereal beta-D-glucans.. Hydrolyzes 1,4-beta-glycosyl linkages of 1,4-beta-glucans and 1,3-1,4-beta-glucans. Possesses broad substrate specificity for hemicelluloses of type II cell walls. Substrate preference is carboxymethyl-cellulose &gt; 1,3-1,4-beta-glucan &gt; lichenan &gt; arabinoxylan &gt; phospho-swollen cellulose &gt; xylan &gt; glucomannan. May participate in lateral root development. The polypeptide is Endoglucanase 2 (GLU5) (Oryza sativa subsp. japonica (Rice)).